The following is a 252-amino-acid chain: 2-succinyl-6-hydroxy-2,4-cyclohexadiene-1-carboxylate synthase (252 aa).

This sequence belongs to the AB hydrolase superfamily. MenH family. Monomer.

The enzyme catalyses 5-enolpyruvoyl-6-hydroxy-2-succinyl-cyclohex-3-ene-1-carboxylate = (1R,6R)-6-hydroxy-2-succinyl-cyclohexa-2,4-diene-1-carboxylate + pyruvate. The protein operates within quinol/quinone metabolism; 1,4-dihydroxy-2-naphthoate biosynthesis; 1,4-dihydroxy-2-naphthoate from chorismate: step 3/7. It functions in the pathway quinol/quinone metabolism; menaquinone biosynthesis. In terms of biological role, catalyzes a proton abstraction reaction that results in 2,5-elimination of pyruvate from 2-succinyl-5-enolpyruvyl-6-hydroxy-3-cyclohexene-1-carboxylate (SEPHCHC) and the formation of 2-succinyl-6-hydroxy-2,4-cyclohexadiene-1-carboxylate (SHCHC). The chain is 2-succinyl-6-hydroxy-2,4-cyclohexadiene-1-carboxylate synthase from Citrobacter koseri (strain ATCC BAA-895 / CDC 4225-83 / SGSC4696).